Consider the following 348-residue polypeptide: Holliday junction branch migration complex subunit RuvB (348 aa).

Positions 4-198 are large ATPase domain (RuvB-L); the sequence is TTDYGASNTG…FGFTAHLDFY (195 aa). ATP contacts are provided by residues Leu-37, Arg-38, Gly-79, Lys-82, Thr-83, Thr-84, 145–147, Arg-188, Tyr-198, and Arg-235; that span reads EDF. Thr-83 provides a ligand contact to Mg(2+). Residues 199-269 are small ATPAse domain (RuvB-S); it reads PHEELEKLIE…DVKEALALYQ (71 aa). Residues 272-348 are head domain (RuvB-H); sequence SEGLDRLDIA…DIIFGNYAQR (77 aa). Arg-327 and Arg-332 together coordinate DNA.

Belongs to the RuvB family. As to quaternary structure, homohexamer. Forms an RuvA(8)-RuvB(12)-Holliday junction (HJ) complex. HJ DNA is sandwiched between 2 RuvA tetramers; dsDNA enters through RuvA and exits via RuvB. An RuvB hexamer assembles on each DNA strand where it exits the tetramer. Each RuvB hexamer is contacted by two RuvA subunits (via domain III) on 2 adjacent RuvB subunits; this complex drives branch migration. In the full resolvosome a probable DNA-RuvA(4)-RuvB(12)-RuvC(2) complex forms which resolves the HJ.

The protein resides in the cytoplasm. The enzyme catalyses ATP + H2O = ADP + phosphate + H(+). In terms of biological role, the RuvA-RuvB-RuvC complex processes Holliday junction (HJ) DNA during genetic recombination and DNA repair, while the RuvA-RuvB complex plays an important role in the rescue of blocked DNA replication forks via replication fork reversal (RFR). RuvA specifically binds to HJ cruciform DNA, conferring on it an open structure. The RuvB hexamer acts as an ATP-dependent pump, pulling dsDNA into and through the RuvAB complex. RuvB forms 2 homohexamers on either side of HJ DNA bound by 1 or 2 RuvA tetramers; 4 subunits per hexamer contact DNA at a time. Coordinated motions by a converter formed by DNA-disengaged RuvB subunits stimulates ATP hydrolysis and nucleotide exchange. Immobilization of the converter enables RuvB to convert the ATP-contained energy into a lever motion, pulling 2 nucleotides of DNA out of the RuvA tetramer per ATP hydrolyzed, thus driving DNA branch migration. The RuvB motors rotate together with the DNA substrate, which together with the progressing nucleotide cycle form the mechanistic basis for DNA recombination by continuous HJ branch migration. Branch migration allows RuvC to scan DNA until it finds its consensus sequence, where it cleaves and resolves cruciform DNA. This is Holliday junction branch migration complex subunit RuvB from Bifidobacterium longum (strain DJO10A).